We begin with the raw amino-acid sequence, 396 residues long: Probable circularly permuted 1,3-beta-glucanase YJL171C (396 aa).

Positions 1–19 (MLQSIVLSVCMFMLHTVAA) are cleaved as a signal peptide. Residues Asn51, Asn99, Asn122, Asn146, Asn174, Asn219, and Asn249 are each glycosylated (N-linked (GlcNAc...) asparagine). An ExDxxE motif motif is present at residues 259-264 (EYDIFE). N-linked (GlcNAc...) asparagine glycans are attached at residues Asn267, Asn300, Asn328, and Asn346. Asn368 carries the GPI-anchor amidated asparagine lipid modification. The propeptide at 369-396 (GVALTKMQNGVWYYILAIFTAFTQVVLI) is removed in mature form.

This sequence belongs to the PGA52 family. Extensively N-glycosylated.

The protein resides in the cell membrane. It catalyses the reaction Hydrolysis of (1-&gt;3)-beta-D-glucosidic linkages in (1-&gt;3)-beta-D-glucans.. In terms of biological role, probable circularly permuted 1,3-beta-glucanase involved in cell wall modification through beta-1,3-glucan network alterations such as increased branching or remodeling. The chain is Probable circularly permuted 1,3-beta-glucanase YJL171C (TOH1) from Saccharomyces cerevisiae (strain ATCC 204508 / S288c) (Baker's yeast).